A 712-amino-acid chain; its full sequence is Polyribonucleotide nucleotidyltransferase (712 aa).

Residues Asp-487 and Asp-493 each contribute to the Mg(2+) site. One can recognise a KH domain in the interval 554-613 (PRIEVMNIPVDKIREVIGSGGKVIREIVEKTGAKINIEDDGTVKIASSSGKEIEAARKWI). An S1 motif domain is found at 623–691 (GQIYEGTVVK…ERGKVRLSMK (69 aa)).

It belongs to the polyribonucleotide nucleotidyltransferase family. The cofactor is Mg(2+).

It localises to the cytoplasm. It carries out the reaction RNA(n+1) + phosphate = RNA(n) + a ribonucleoside 5'-diphosphate. Functionally, involved in mRNA degradation. Catalyzes the phosphorolysis of single-stranded polyribonucleotides processively in the 3'- to 5'-direction. The chain is Polyribonucleotide nucleotidyltransferase from Rhizobium etli (strain ATCC 51251 / DSM 11541 / JCM 21823 / NBRC 15573 / CFN 42).